We begin with the raw amino-acid sequence, 327 residues long: Methionine import ATP-binding protein MetN (327 aa).

The ABC transporter domain occupies 3–239 (VELKNIEKIY…PKHAVTKELL (237 aa)). 36–43 (GYSGAGKS) contributes to the ATP binding site.

It belongs to the ABC transporter superfamily. Methionine importer (TC 3.A.1.24) family. In terms of assembly, the complex is composed of two ATP-binding proteins (MetN), two transmembrane proteins (MetI) and a solute-binding protein (MetQ).

The protein resides in the cell inner membrane. It catalyses the reaction L-methionine(out) + ATP + H2O = L-methionine(in) + ADP + phosphate + H(+). The catalysed reaction is D-methionine(out) + ATP + H2O = D-methionine(in) + ADP + phosphate + H(+). In terms of biological role, part of the ABC transporter complex MetNIQ involved in methionine import. Responsible for energy coupling to the transport system. The polypeptide is Methionine import ATP-binding protein MetN (Helicobacter pylori (strain ATCC 700392 / 26695) (Campylobacter pylori)).